We begin with the raw amino-acid sequence, 2042 residues long: Protein mini spindles (2042 aa).

TOG stretches follow at residues 1 to 229 (MAED…VEPS) and 267 to 505 (MDLL…KVAG). Residues 1-505 (MAEDTEYKKL…KAEIKIKVAG (505 aa)) are binds tubulin. Promotes microtubule polymerization regions lie at residues 1-516 (MAED…ASAP) and 581-1080 (TPEE…EKAR). 7 HEAT repeats span residues 120–157 (EKQEAVVEELVKGMEAKNPKIVSACVAATTLALREFGH), 160–197 (IGVKPLIKKLAPLMSDRDKTVRDEGKQLAVEIYRWIGA), 270–311 (LDPV…DHPK), 315–353 (GEYGALVSALKKVITKDSNVVLVAMAGKCLALLAKGLAK), 357–394 (NYASACVPSLLEKFKEKKPNVVTALREAIDAIYASTSL), 396–433 (AQQESIVESLSNKNPSVKSETALFIARALTRTQPTALN), and 440–478 (LTTSLVKTLNEPDPTVRDSSAEALGTLIKLMGDKAVTPL). Residues 498-821 (EIKIKVAGPK…PKPVRGVQRS (324 aa)) are association with microtubule lattice. The interval 506–572 (PKKETRPASA…PTAALKAGGK (67 aa)) is disordered. A compositionally biased stretch (low complexity) spans 513 to 531 (ASAPTAKAAAPAKTVAGSV). Residues 581-814 (TPEELQEKSE…KNVGEKPPKP (234 aa)) form a TOG 3 region. HEAT repeat units follow at residues 587-624 (EKSEEILPAEILNGLVDSNWKNRLAAVEQLLGEISGFD), 625-662 (AKQAGISQILIRTISGRKPGLKEMNFQVLKFKLDIIRS), 672-710 (TTVDLVINEIIEKLADAKNGAAAADVLSAFAEATKLEYV), and 745-782 (LQPKTLIEDVRKGVQSTNPTVRASAIQMVGTMSMYMGK). A disordered region spans residues 804-849 (DKNVGEKPPKPVRGVQRSSGGTAGNSPDNEDDDGGAAGEEEPINMA). Residues 819–830 (QRSSGGTAGNSP) are compositionally biased toward polar residues. Residues 831-845 (DNEDDDGGAAGEEEP) are compositionally biased toward acidic residues. 2 TOG regions span residues 849–1087 (ADLL…PVKP) and 1179–1415 (TELL…KPTP). HEAT repeat units lie at residues 856-893 (DIAPQITEALLKEMSDKDWKTRNEGLTKLQAIISEARL), 896-933 (PSIGDLAPALAHRLVDSNAKIAQTTLAICEQLATAMGA), 937-974 (NHVRNLFPGFLHALGDNKSFVRAAALNCINSFGEKGGY), and 1017-1054 (EDIHSMVPHLYAHICDRNADVRKNANEAVLGIMIHLGF). The disordered stretch occupies residues 1083–1140 (LPVKPLPKGKHQAPIPEEPKLKTVRGGGAGGAPGIQKSATARVAGGQDKQVPARKKDE). The segment at 1099–1428 (EEPKLKTVRG…VDVPAPQRHD (330 aa)) is association with microtubule lattice. HEAT repeat units lie at residues 1205–1242 (RYHLKVIEQLSEDLAGNSKALVCNLDLILKWLTLRFYD), 1272–1309 (NEGSSFVPHLLLKIGDPKDAVRNGVRRVLRQVILVFPF), 1311–1344 (KVFGYVMEGLKSKNARQRTECLDELTFLIESYGM), and 1346–1383 (ICPQSAVREIARQISDRDNSVRNAALNCIVQVFFLSGE). Disordered regions lie at residues 1407–1455 (AKKT…TFDQ) and 1940–1959 (NAGSTQDNRTDVNYQNNGPD). Over residues 1940 to 1957 (NAGSTQDNRTDVNYQNNG) the composition is skewed to polar residues.

It belongs to the TOG/XMAP215 family. Interacts with tacc, dgt6. Interacts with mv. Interacts with Patronin.

Its subcellular location is the cytoplasm. The protein resides in the cytoskeleton. It localises to the microtubule organizing center. The protein localises to the centrosome. It is found in the spindle. Its subcellular location is the perinuclear region. In terms of biological role, binds to the plus end of microtubules and regulates microtubule dynamics and microtubule organization. Function in neurons is essential for adult survival, and is important for climbing behavior and activity. Promotes cytoplasmic microtubule nucleation and elongation. May act as a microtubule antipause factor that rapidly catalyzes the transition from pause to either growth or shrinkage. Involved in mitotic spindle elongation. Involved in the establishment of cell polarity and mitotic spindle orientation in neuroblasts. Required for maintaining the bipolarity of acentrosomal meiotic spindles; the function is dependent on tacc and involves ncd. Involved in oocyte microtubule cytoskeleton organization and bicoid mRNA localization. Seems to be involved in elongation of kinetochore-derived microtubule fibers. In fat body cells, essential component of perinuclear non-centrosomal microtubule-organizing centers (ncMTOCs) which function to accommodate the organization of microtubule (MT) networks to control nuclear positioning and dynein motor-based retrograde endosomal trafficking. Within the ncMTOCs, Msp300 and shot anchors the ncMTOC at the nuclear surface and recruits the MT minus-end regulators Patronin and Nin for assembly, anchoring and/or stabilization of circumferential and radial MTs at the ncMTOCs. Patronin, and perhaps Nin, then recruits msps to the ncMTOC where it is required for the gamma-tubulin-independent elongation and assembly of radial MTs. The polypeptide is Protein mini spindles (msps) (Drosophila melanogaster (Fruit fly)).